A 141-amino-acid chain; its full sequence is MSNITIYHNPACGTSRNTLEMIRNSGTEPTIILYLENPPSRDELVKLIADMGISVRALLRKNVEPYEQLGLAEDKFTDDQLIDFMLQHPILINRPIVVTPLGTRLCRPSEVVLDILQDAQKGAFTKEDGEKVVDEAGKRLK.

The active-site Nucleophile; cysteine thioarsenate intermediate is cysteine 12.

The protein belongs to the ArsC family. As to quaternary structure, monomer in solution.

It carries out the reaction [glutaredoxin]-dithiol + arsenate + glutathione + H(+) = glutathionyl-S-S-[glutaredoxin] + arsenite + H2O. Its activity is regulated as follows. Inhibited by the thiol reagents iodoacetate (IAA) and N-ethylmaleimide (NEM). Activity is rapidly inactivated by the histidine-modifying reagent diethylpyrocarbonate (DEPC). Its function is as follows. Involved in resistance to arsenate. Catalyzes the reduction of arsenate [As(V)] to arsenite [As(III)]. The resulting arsenite is then extruded from the cell via the ArsAB transport system. The protein is Arsenate reductase of Escherichia coli.